The chain runs to 209 residues: Glycerol-3-phosphate acyltransferase (209 aa).

The next 5 helical transmembrane spans lie at 5 to 25 (IIGM…LWIG), 50 to 70 (LGFK…TLAA), 74 to 94 (YFLG…ASLG), 115 to 135 (ILLA…IFVL), and 151 to 171 (AIFI…AGIL).

The protein belongs to the PlsY family. As to quaternary structure, probably interacts with PlsX.

It is found in the cell membrane. The enzyme catalyses an acyl phosphate + sn-glycerol 3-phosphate = a 1-acyl-sn-glycero-3-phosphate + phosphate. It functions in the pathway lipid metabolism; phospholipid metabolism. Its function is as follows. Catalyzes the transfer of an acyl group from acyl-phosphate (acyl-PO(4)) to glycerol-3-phosphate (G3P) to form lysophosphatidic acid (LPA). This enzyme utilizes acyl-phosphate as fatty acyl donor, but not acyl-CoA or acyl-ACP. This Limosilactobacillus reuteri (strain DSM 20016) (Lactobacillus reuteri) protein is Glycerol-3-phosphate acyltransferase.